The primary structure comprises 1150 residues: Cohesin subunit SCC3 (1150 aa).

Over residues 1-12 the composition is skewed to basic residues; the sequence is MTAVRRSTRIRT. The interval 1 to 122 is disordered; it reads MTAVRRSTRI…PAYHRSKKDQ (122 aa). Residue Ser-28 is modified to Phosphoserine. The span at 32–43 shows a compositional bias: basic and acidic residues; the sequence is VESDKITAKTQH. Residues 44 to 72 are compositionally biased toward acidic residues; the sequence is EEEEEQDTGESEESSSEDDYEDQDDDDYV. Positions 77–87 are enriched in basic residues; the sequence is AKRKSRKRKPK. Residues 305–349 adopt a coiled-coil conformation; that stretch reads LTQQAVNLEKNYLAKLSKQLSLEEKKKRPNNKTLEKLESTIAETQ. The SCD domain occupies 367–457; sequence FVHRYKDVSD…ERFKTKILEV (91 aa). At Ser-628 the chain carries Phosphoserine. The segment at 1065–1150 is disordered; sequence ENPEPNKKNI…IDNSDEITQD (86 aa). Residues 1083–1101 are compositionally biased toward basic and acidic residues; it reads QREKAPLQPNSERETDHAN.

The protein belongs to the SCC3 family. In terms of assembly, interacts directly with MCD1 in cohesin complex. Cohesin complexes are composed of the SMC1 and SMC3 heterodimer attached via their hinge domain, MCD1 which link them, and IRR1/SCC3, which interacts with MCD1. The cohesin complex also interacts with SCC2, which is required for its association with chromosomes. Interacts with LIN1. Post-translationally, acetylated by ECO1.

It is found in the nucleus. The protein localises to the chromosome. The protein resides in the centromere. Its function is as follows. Component of cohesin complex, a complex required for the cohesion of sister chromatids after DNA replication. The cohesin complex apparently forms a large proteinaceous ring within which sister chromatids can be trapped. At anaphase, the MCD1/SCC1 subunit of the complex is cleaved and dissociates from chromatin, allowing sister chromatids to segregate. The cohesin complex may also play a role in spindle pole assembly during mitosis. This is Cohesin subunit SCC3 (IRR1) from Saccharomyces cerevisiae (strain ATCC 204508 / S288c) (Baker's yeast).